Here is a 430-residue protein sequence, read N- to C-terminus: MKETIDFLIDTIEARQVLDSRGNPTVEAEVFLECGAIGRAIVPSGASTGAHEAHELRDGGTKYMGKGVLNAVNKIHETISPALCGLSALDQTSIDNLMIEIDGTPNKSSLGANSILAVSLANARAASNALDLPLYRYLGDPLSNLLPVPLMNVINGGAHAPNGLDCQEFMLVPHGVKTFSEALRIGTEIFHSLKSLLEKKGLSTAVGDEGGFAPELSSSEAAGDLLLEAIQKAGFIPGEQVSLALDVASTEFYKDGFYKYEGKSLTSSQMISYLSNLVSNYPIVSIEDGLAEDDWEGWSALNKEIGNKVQLVGDDLFVTNTERLRKGILEKSANSILIKVNQIGTLTETLEAMDLAKSAGFTSVISHRSGETEDTTIADLSVATRAGQIKTGSLSRSERIAKYNRLLRIEEELGDQARFAGDLGLGPKNI.

Gln-167 is a (2R)-2-phosphoglycerate binding site. Glu-209 acts as the Proton donor in catalysis. Mg(2+) is bound by residues Asp-246, Glu-287, and Asp-314. (2R)-2-phosphoglycerate is bound by residues Lys-339, Arg-368, Ser-369, and Lys-390. Lys-339 acts as the Proton acceptor in catalysis.

It belongs to the enolase family. Mg(2+) is required as a cofactor.

The protein resides in the cytoplasm. It localises to the secreted. Its subcellular location is the cell surface. It carries out the reaction (2R)-2-phosphoglycerate = phosphoenolpyruvate + H2O. It functions in the pathway carbohydrate degradation; glycolysis; pyruvate from D-glyceraldehyde 3-phosphate: step 4/5. Functionally, catalyzes the reversible conversion of 2-phosphoglycerate (2-PG) into phosphoenolpyruvate (PEP). It is essential for the degradation of carbohydrates via glycolysis. This chain is Enolase, found in Prochlorococcus marinus subsp. pastoris (strain CCMP1986 / NIES-2087 / MED4).